The sequence spans 239 residues: RNA-binding protein 38 (239 aa).

Positions 34–111 (TKIFVGGLPY…RKANVNLAYL (78 aa)) constitute an RRM domain.

This sequence belongs to the RBM38 family.

It is found in the cytoplasm. Its subcellular location is the cytosol. It localises to the nucleus. RNA-binding protein that specifically bind the 3'-UTR of CDKN1A transcripts, leading to maintain the stability of CDKN1A transcripts, thereby acting as a mediator of the p53/TP53 family to regulate CDKN1A. CDKN1A is a cyclin-dependent kinase inhibitor transcriptionally regulated by the p53/TP53 family to induce cell cycle arrest. Isoform 1, but not isoform 2, has the ability to induce cell cycle arrest in G1 and maintain the stability of CDKN1A transcripts induced by p53/TP53. Also acts as a mRNA splicing factor. Specifically regulates the expression of FGFR2-IIIb, an epithelial cell-specific isoform of FGFR2. Plays a role in myogenic differentiation. Functionally, (Microbial infection) Essential factor for the splicing of the pre-mRNAs of human parvovirus B19 (B19V) and for the expression of B19V 11-kDa protein, which enhances viral replication. The chain is RNA-binding protein 38 (RBM38) from Homo sapiens (Human).